The sequence spans 614 residues: UvrABC system protein C (614 aa).

The GIY-YIG domain occupies 25–103; it reads SVPGVYKMFG…IKSLKPKYNI (79 aa). In terms of domain architecture, UVR spans 214–249; the sequence is KEIQCELFEMMCRFSNNQDYESAIVCRDRLHALKSM.

This sequence belongs to the UvrC family. In terms of assembly, interacts with UvrB in an incision complex.

The protein localises to the cytoplasm. Its function is as follows. The UvrABC repair system catalyzes the recognition and processing of DNA lesions. UvrC both incises the 5' and 3' sides of the lesion. The N-terminal half is responsible for the 3' incision and the C-terminal half is responsible for the 5' incision. This chain is UvrABC system protein C, found in Anaplasma phagocytophilum (strain HZ).